Here is a 570-residue protein sequence, read N- to C-terminus: Sulfite reductase [NADPH] hemoprotein beta-component (570 aa).

[4Fe-4S] cluster is bound by residues Cys434, Cys440, Cys479, and Cys483. Cys483 contributes to the siroheme binding site.

This sequence belongs to the nitrite and sulfite reductase 4Fe-4S domain family. Alpha(8)-beta(8). The alpha component is a flavoprotein, the beta component is a hemoprotein. Requires siroheme as cofactor. [4Fe-4S] cluster serves as cofactor.

The catalysed reaction is hydrogen sulfide + 3 NADP(+) + 3 H2O = sulfite + 3 NADPH + 4 H(+). The protein operates within sulfur metabolism; hydrogen sulfide biosynthesis; hydrogen sulfide from sulfite (NADPH route): step 1/1. Component of the sulfite reductase complex that catalyzes the 6-electron reduction of sulfite to sulfide. This is one of several activities required for the biosynthesis of L-cysteine from sulfate. The chain is Sulfite reductase [NADPH] hemoprotein beta-component from Escherichia coli O6:H1 (strain CFT073 / ATCC 700928 / UPEC).